Here is a 380-residue protein sequence, read N- to C-terminus: Crotonobetainyl-CoA reductase (380 aa).

The protein belongs to the acyl-CoA dehydrogenase family. As to quaternary structure, homotetramer. It depends on FAD as a cofactor.

The protein localises to the cytoplasm. The enzyme catalyses 4-(trimethylamino)butanoyl-CoA + oxidized [electron-transfer flavoprotein] + H(+) = crotonobetainyl-CoA + reduced [electron-transfer flavoprotein]. The protein operates within amine and polyamine metabolism; carnitine metabolism. Catalyzes the reduction of crotonobetainyl-CoA to gamma-butyrobetainyl-CoA. This Escherichia coli (strain UTI89 / UPEC) protein is Crotonobetainyl-CoA reductase.